A 203-amino-acid chain; its full sequence is Thymidylate kinase (203 aa).

10–17 (GIDGAGKS) serves as a coordination point for ATP.

The protein belongs to the thymidylate kinase family.

It carries out the reaction dTMP + ATP = dTDP + ADP. In terms of biological role, phosphorylation of dTMP to form dTDP in both de novo and salvage pathways of dTTP synthesis. In Cupriavidus taiwanensis (strain DSM 17343 / BCRC 17206 / CCUG 44338 / CIP 107171 / LMG 19424 / R1) (Ralstonia taiwanensis (strain LMG 19424)), this protein is Thymidylate kinase.